We begin with the raw amino-acid sequence, 828 residues long: Protein kintoun (828 aa).

5 disordered regions span residues 1–31 (MSGS…DEPI), 223–250 (KNPT…EGEP), 383–424 (DSGV…PTSN), 556–668 (APVQ…HRGI), and 741–828 (KKNQ…EDLI). The segment covering 9 to 22 (RNKHSKGNLKHNNN) has biased composition (basic residues). Serine 384 is subject to Phosphoserine. A compositionally biased stretch (acidic residues) spans 395–414 (PVEEEEDGEDEIEAEEEEEE). Over residues 556–573 (APVQEDKPGDIQFKRNDQ) the composition is skewed to basic and acidic residues. Over residues 591–601 (EREEGEIEEAE) the composition is skewed to acidic residues. Residues 606-620 (KKSASKKQRGKRNKK) show a composition bias toward basic residues. The segment covering 625-641 (SESACVSLPTSVDSQPM) has biased composition (polar residues). Over residues 741–755 (KKNQKRRDCKLRAQQ) the composition is skewed to basic residues. Position 759 is a phosphoserine (serine 759). The span at 788 to 808 (DSGLDLTRHNKKRELAEEADN) shows a compositional bias: basic and acidic residues. The span at 815–828 (EMDDDDDDEDEDLI) shows a compositional bias: acidic residues.

It belongs to the PIH1 family. Kintoun subfamily. In terms of assembly, interacts with Pp1alpha-96A, Pp1-87B, Pp1-13C and flw.

Its subcellular location is the cytoplasm. Required for cytoplasmic pre-assembly of axonemal dyneins, thereby playing a central role in motility in cilia and flagella. Involved in pre-assembly of dynein arm complexes in the cytoplasm before intraflagellar transport loads them for the ciliary compartment. In Drosophila willistoni (Fruit fly), this protein is Protein kintoun.